We begin with the raw amino-acid sequence, 341 residues long: N-acetyl-gamma-glutamyl-phosphate reductase (341 aa).

Cysteine 148 is an active-site residue.

Belongs to the NAGSA dehydrogenase family. Type 1 subfamily.

It is found in the cytoplasm. It carries out the reaction N-acetyl-L-glutamate 5-semialdehyde + phosphate + NADP(+) = N-acetyl-L-glutamyl 5-phosphate + NADPH + H(+). It participates in amino-acid biosynthesis; L-arginine biosynthesis; N(2)-acetyl-L-ornithine from L-glutamate: step 3/4. Functionally, catalyzes the NADPH-dependent reduction of N-acetyl-5-glutamyl phosphate to yield N-acetyl-L-glutamate 5-semialdehyde. In Pseudothermotoga lettingae (strain ATCC BAA-301 / DSM 14385 / NBRC 107922 / TMO) (Thermotoga lettingae), this protein is N-acetyl-gamma-glutamyl-phosphate reductase.